The chain runs to 190 residues: Holliday junction branch migration complex subunit RuvA (190 aa).

The domain I stretch occupies residues 1 to 64; sequence MIGKLTGTLL…EDAQLLYGFG (64 aa). The segment at 65–137 is domain II; that stretch reads TAQERQAFRE…LKGKLGADVG (73 aa). The segment at 137 to 141 is flexible linker; the sequence is GVRAH. The tract at residues 142–190 is domain III; the sequence is AANDNQADILQALLALGYNDKEAAAALKALPADVGVSEGIKLALKSLSK.

Belongs to the RuvA family. In terms of assembly, homotetramer. Forms an RuvA(8)-RuvB(12)-Holliday junction (HJ) complex. HJ DNA is sandwiched between 2 RuvA tetramers; dsDNA enters through RuvA and exits via RuvB. An RuvB hexamer assembles on each DNA strand where it exits the tetramer. Each RuvB hexamer is contacted by two RuvA subunits (via domain III) on 2 adjacent RuvB subunits; this complex drives branch migration. In the full resolvosome a probable DNA-RuvA(4)-RuvB(12)-RuvC(2) complex forms which resolves the HJ.

It localises to the cytoplasm. Its function is as follows. The RuvA-RuvB-RuvC complex processes Holliday junction (HJ) DNA during genetic recombination and DNA repair, while the RuvA-RuvB complex plays an important role in the rescue of blocked DNA replication forks via replication fork reversal (RFR). RuvA specifically binds to HJ cruciform DNA, conferring on it an open structure. The RuvB hexamer acts as an ATP-dependent pump, pulling dsDNA into and through the RuvAB complex. HJ branch migration allows RuvC to scan DNA until it finds its consensus sequence, where it cleaves and resolves the cruciform DNA. This Acidovorax ebreus (strain TPSY) (Diaphorobacter sp. (strain TPSY)) protein is Holliday junction branch migration complex subunit RuvA.